We begin with the raw amino-acid sequence, 488 residues long: N-succinylglutamate 5-semialdehyde dehydrogenase (488 aa).

Residue 221–226 (GSSRTG) participates in NAD(+) binding. Residues Glu-244 and Cys-278 contribute to the active site.

The protein belongs to the aldehyde dehydrogenase family. AstD subfamily.

It catalyses the reaction N-succinyl-L-glutamate 5-semialdehyde + NAD(+) + H2O = N-succinyl-L-glutamate + NADH + 2 H(+). It participates in amino-acid degradation; L-arginine degradation via AST pathway; L-glutamate and succinate from L-arginine: step 4/5. Its function is as follows. Catalyzes the NAD-dependent reduction of succinylglutamate semialdehyde into succinylglutamate. In Pseudomonas syringae pv. syringae (strain B728a), this protein is N-succinylglutamate 5-semialdehyde dehydrogenase.